The primary structure comprises 262 residues: MSNDFDTIIKNIIKDSPAGELEEVYQDLITIAGENSKETIIDAIAEYNVENSIPIDVDGKDVIISKYNKQGTKFVDPVNGIQFSVDHLHQKGLDVEEYSADIDADQKKAITDLGNYLSTNFPGRATFAVLPLEEQSKTAIIIVSTKYNPSNFWNGHWKSEYVYDKTEGKLSGTIDIDVHYYEDGNVKFHSSKLVEETNIKDPVASIKELEHKFEQDLQESFTDLNEKQFKSLRRRLPITRARVNWGKAIGNYRLGRDAAQGK.

It belongs to the F-actin-capping protein alpha subunit family. In terms of assembly, heterodimer of an alpha and a beta subunit.

F-actin-capping proteins bind in a Ca(2+)-independent manner to the fast growing ends of actin filaments (barbed end) thereby blocking the exchange of subunits at these ends. Unlike other capping proteins (such as gelsolin and severin), these proteins do not sever actin filaments. In Candida glabrata (strain ATCC 2001 / BCRC 20586 / JCM 3761 / NBRC 0622 / NRRL Y-65 / CBS 138) (Yeast), this protein is F-actin-capping protein subunit alpha (CAP1).